We begin with the raw amino-acid sequence, 511 residues long: Phosphoenolpyruvate carboxylase (511 aa).

The protein belongs to the PEPCase type 2 family. Homotetramer. The cofactor is Mg(2+).

It carries out the reaction oxaloacetate + phosphate = phosphoenolpyruvate + hydrogencarbonate. Its function is as follows. Catalyzes the irreversible beta-carboxylation of phosphoenolpyruvate (PEP) to form oxaloacetate (OAA), a four-carbon dicarboxylic acid source for the tricarboxylic acid cycle. The protein is Phosphoenolpyruvate carboxylase of Saccharolobus islandicus (strain Y.N.15.51 / Yellowstone #2) (Sulfolobus islandicus).